A 382-amino-acid polypeptide reads, in one-letter code: Glutamyl-tRNA reductase (382 aa).

Residues 38–41 (TCNR), serine 85, 90–92 (ENQ), and glutamine 96 contribute to the substrate site. Cysteine 39 (nucleophile) is an active-site residue. Residue 164–169 (GAGEIG) coordinates NADP(+).

The protein belongs to the glutamyl-tRNA reductase family. Homodimer.

It catalyses the reaction (S)-4-amino-5-oxopentanoate + tRNA(Glu) + NADP(+) = L-glutamyl-tRNA(Glu) + NADPH + H(+). The protein operates within porphyrin-containing compound metabolism; protoporphyrin-IX biosynthesis; 5-aminolevulinate from L-glutamyl-tRNA(Glu): step 1/2. In terms of biological role, catalyzes the NADPH-dependent reduction of glutamyl-tRNA(Glu) to glutamate 1-semialdehyde (GSA). The chain is Glutamyl-tRNA reductase from Methanococcus maripaludis (strain C7 / ATCC BAA-1331).